A 190-amino-acid chain; its full sequence is Ribosome maturation factor RimM (190 aa).

Residues 95-171 (DPDEFYDHEL…VVMIEPPEGL (77 aa)) form the PRC barrel domain. Residues 169 to 190 (EGLLDPDFGDKSNSDNSNSDND) form a disordered region.

This sequence belongs to the RimM family. Binds ribosomal protein uS19.

Its subcellular location is the cytoplasm. Its function is as follows. An accessory protein needed during the final step in the assembly of 30S ribosomal subunit, possibly for assembly of the head region. Essential for efficient processing of 16S rRNA. May be needed both before and after RbfA during the maturation of 16S rRNA. It has affinity for free ribosomal 30S subunits but not for 70S ribosomes. The polypeptide is Ribosome maturation factor RimM (Rhodococcus erythropolis (strain PR4 / NBRC 100887)).